Here is a 92-residue protein sequence, read N- to C-terminus: MTRSLKKNPFVANNLLKKINKLNTKEEKEIIITWSRASTIIPIMVGHTIAIHNGKEHLPIYITDRMVGHKLGEFAPTLNFRGHAKSDNRSRR.

It belongs to the universal ribosomal protein uS19 family.

It localises to the plastid. The protein localises to the chloroplast. Its function is as follows. Protein S19 forms a complex with S13 that binds strongly to the 16S ribosomal RNA. This Guizotia abyssinica (Niger) protein is Small ribosomal subunit protein uS19c.